The chain runs to 318 residues: sn-1 stearoyl-lipid 9-desaturase (318 aa).

The next 2 membrane-spanning stretches (helical) occupy residues 56-76 and 80-100; these read VIFF…PQFF and AVGM…TLGF. Residues 101-106 carry the Histidine box-1 motif; it reads HRCISH. Residues 117–137 traverse the membrane as a helical segment; sequence YIFVICGTLACQGGVFEWVGL. The short motif at 138–142 is the Histidine box-2 element; the sequence is HRMHH. The helical transmembrane segment at 201 to 221 threads the bilayer; it reads VALGLILFALGGWPFVIWGIF. The Histidine box-3 motif lies at 271–275; it reads HHAYQ.

This sequence belongs to the fatty acid desaturase type 2 family. Fe(2+) serves as cofactor.

Its subcellular location is the cellular thylakoid membrane. The catalysed reaction is a 1-octadecanoyl 2-acyl-glycerolipid + 2 reduced [2Fe-2S]-[ferredoxin] + O2 + 2 H(+) = a 1-[(9Z)-octadecenoyl]-2-acyl-glycerolipid + 2 oxidized [2Fe-2S]-[ferredoxin] + 2 H2O. The protein operates within lipid metabolism; polyunsaturated fatty acid biosynthesis. In terms of biological role, desaturase involved in fatty acid biosynthesis. Introduces a double bond at carbon 9 of stearoyl groups (18:0) attached to the sn-1 position of the glycerol moiety of membrane glycerolipids. Does not desaturate palmitic acid (16:0), palmitoleic acid (16:1) and cis-vaccenic acid (18:1). This is sn-1 stearoyl-lipid 9-desaturase from Synechocystis sp. (strain ATCC 27184 / PCC 6803 / Kazusa).